A 75-amino-acid chain; its full sequence is uncharacterized protein (75 aa).

This is an uncharacterized protein from Vaccinia virus (strain Copenhagen) (VACV).